Here is a 440-residue protein sequence, read N- to C-terminus: Xylose isomerase (440 aa).

Active-site residues include His101 and Asp104. Mg(2+) is bound by residues Glu232, Glu268, His271, Asp296, Asp307, Asp309, and Asp339.

The protein belongs to the xylose isomerase family. Homotetramer. Mg(2+) is required as a cofactor.

It localises to the cytoplasm. The enzyme catalyses alpha-D-xylose = alpha-D-xylulofuranose. The polypeptide is Xylose isomerase (Escherichia coli O157:H7).